The sequence spans 151 residues: Large ribosomal subunit protein bL9 (151 aa).

This sequence belongs to the bacterial ribosomal protein bL9 family.

Binds to the 23S rRNA. The polypeptide is Large ribosomal subunit protein bL9 (Lactobacillus johnsonii (strain CNCM I-12250 / La1 / NCC 533)).